The primary structure comprises 394 residues: 1-acylglycerol-3-phosphate O-acyltransferase ICT1 (394 aa).

Positions 74–381 (VLIHGYAASS…AGHNLFLDNP (308 aa)) constitute an AB hydrolase-1 domain. The short motif at 374-379 (HNLFLD) is the HXXXXD motif element.

It belongs to the peptidase S33 family. ABHD4/ABHD5 subfamily.

It catalyses the reaction a 1-acyl-sn-glycero-3-phosphate + an acyl-CoA = a 1,2-diacyl-sn-glycero-3-phosphate + CoA. Functionally, lysophosphatidic acid acyltransferase involved in membrane remodeling leading to increased organic solvent tolerance. Involved in resistance to azoles and copper. In Saccharomyces cerevisiae (strain ATCC 204508 / S288c) (Baker's yeast), this protein is 1-acylglycerol-3-phosphate O-acyltransferase ICT1 (ICT1).